The chain runs to 768 residues: Kelch domain-containing protein 7A (768 aa).

Residues V12–Y29 form a helical membrane-spanning segment. The segment at P35–M210 is disordered. At S77 the chain carries Phosphoserine. Basic and acidic residues predominate over residues T104–G118. N-linked (GlcNAc...) asparagine glycosylation is present at N248. Residues L304–S352 are disordered. One copy of the Kelch 1 repeat lies at T319–E365. A Phosphoserine modification is found at S356. The segment at D371–E395 is disordered. Kelch repeat units lie at residues Q483–L529, Y532–G580, H581–C623, and E626–G668.

It localises to the membrane. This Pongo abelii (Sumatran orangutan) protein is Kelch domain-containing protein 7A (KLHDC7A).